Reading from the N-terminus, the 1149-residue chain is Bone sialoprotein-binding protein (1149 aa).

The first 52 residues, 1–52 (MINRDNKKAITKKGMISNRLNKFSIRKYTVGTASILVGTTLIFGLGNQEAKA), serve as a signal peptide directing secretion. The segment at 53–601 (AENTSTENAK…GDGTVKPEEK (549 aa)) is ligand binding A region. Disordered stretches follow at residues 54 to 249 (ENTS…TAPT) and 675 to 697 (LPTK…VTVK). Residues 61–75 (AKQDEASASDNKEVV) show a composition bias toward basic and acidic residues. Residues 77–89 (ETENNSTQKNDLT) show a composition bias toward polar residues. Positions 92–106 (IKKETNTDSHQEAKE) are enriched in basic and acidic residues. Over residues 109–126 (TTSSTQQQQNNATTSTET) the composition is skewed to low complexity. Residues 130–145 (NIEKENVKPSTDKTAT) show a composition bias toward basic and acidic residues. Polar residues predominate over residues 158–205 (PNNTNNDVTTKPSTSEIQTTPTTPQESTNIENSQPQPTPSKVDNQVTD). The span at 216-241 (SKEELKNNPEKLKELVRNDSNTDRST) shows a compositional bias: basic and acidic residues. CNA-B domains follow at residues 602-714 (LYKI…YKEP), 715-824 (KYNL…YKTP), and 825-935 (KYSL…EEDT). The disordered stretch occupies residues 896–1124 (TQTGTNTTED…TGSENNGSNN (229 aa)). 2 stretches are compositionally biased toward acidic residues: residues 903–913 (TEDDKDADGGE) and 930–1088 (YFEE…DSDS). An LPXTG sorting signal motif is present at residues 1112 to 1116 (LPETG). Residue T1115 is modified to Pentaglycyl murein peptidoglycan amidated threonine. Residues 1116–1149 (GSENNGSNNATLFGGLFAALGSLLLFGRRKKQNK) constitute a propeptide, removed by sortase.

This sequence belongs to the serine-aspartate repeat-containing protein (SDr) family.

It localises to the secreted. Its subcellular location is the cell wall. In terms of biological role, specifically interacts with bone sialoprotein (BSP), a glycoprotein of bone and dentin extracellular matrix. Could contribute to staphylococcal osteomyelitis and arthritis. The chain is Bone sialoprotein-binding protein (bbp) from Staphylococcus aureus.